The chain runs to 271 residues: ATP synthase subunit delta (271 aa).

Belongs to the ATPase delta chain family. In terms of assembly, F-type ATPases have 2 components, F(1) - the catalytic core - and F(0) - the membrane proton channel. F(1) has five subunits: alpha(3), beta(3), gamma(1), delta(1), epsilon(1). F(0) has three main subunits: a(1), b(2) and c(10-14). The alpha and beta chains form an alternating ring which encloses part of the gamma chain. F(1) is attached to F(0) by a central stalk formed by the gamma and epsilon chains, while a peripheral stalk is formed by the delta and b chains.

Its subcellular location is the cell membrane. F(1)F(0) ATP synthase produces ATP from ADP in the presence of a proton or sodium gradient. F-type ATPases consist of two structural domains, F(1) containing the extramembraneous catalytic core and F(0) containing the membrane proton channel, linked together by a central stalk and a peripheral stalk. During catalysis, ATP synthesis in the catalytic domain of F(1) is coupled via a rotary mechanism of the central stalk subunits to proton translocation. Functionally, this protein is part of the stalk that links CF(0) to CF(1). It either transmits conformational changes from CF(0) to CF(1) or is implicated in proton conduction. The sequence is that of ATP synthase subunit delta from Renibacterium salmoninarum (strain ATCC 33209 / DSM 20767 / JCM 11484 / NBRC 15589 / NCIMB 2235).